Reading from the N-terminus, the 311-residue chain is Putative S-adenosyl-L-methionine-dependent methyltransferase MSMEG_0095/MSMEI_0092 (311 aa).

Residues Asp134 and 163-164 each bind S-adenosyl-L-methionine; that span reads DL.

This sequence belongs to the UPF0677 family.

In terms of biological role, exhibits S-adenosyl-L-methionine-dependent methyltransferase activity. The polypeptide is Putative S-adenosyl-L-methionine-dependent methyltransferase MSMEG_0095/MSMEI_0092 (Mycolicibacterium smegmatis (strain ATCC 700084 / mc(2)155) (Mycobacterium smegmatis)).